Here is a 308-residue protein sequence, read N- to C-terminus: Palmitoyltransferase ZDHHC7 (308 aa).

The Cytoplasmic segment spans residues 1–50 (MQPSGHRLRDIEHHPLLTDNDNYDSASSSSSEADMADRVWFIRDGCGMVC). The chain crosses the membrane as a helical span at residues 51 to 71 (AVMTWLLVVYADFVVTFVMLL). Residues 72-75 (PSKD) lie on the Lumenal side of the membrane. Residues 76–96 (FWYSVVNGVLFNCLAVLALSS) traverse the membrane as a helical segment. The Cytoplasmic segment spans residues 97-173 (HLRTMLTDPG…NNCVGEKNQR (77 aa)). The region spanning 130–180 (YKCPKCCCIKPERAHHCSICKRCIRKMDHHCPWVNNCVGEKNQRFFVLFTM) is the DHHC domain. C160 serves as the catalytic S-palmitoyl cysteine intermediate. The chain crosses the membrane as a helical span at residues 174 to 194 (FFVLFTMYIALSSIHALILCG). Over 195-217 (LQFISCVRGQWTECSDFSPPITV) the chain is Lumenal. Residues 218–238 (ILLVFLCLEGLLFFTFTAVMF) form a helical membrane-spanning segment. Over 239–308 (GTQIHSICND…TRKGGPEFSV (70 aa)) the chain is Cytoplasmic.

Belongs to the DHHC palmitoyltransferase family. Homooligomers. Heterooligomers with ZDHHC3. Post-translationally, autopalmitoylated. Widely expressed. Present in Sertoli cells (at protein level).

The protein localises to the golgi apparatus membrane. The catalysed reaction is L-cysteinyl-[protein] + hexadecanoyl-CoA = S-hexadecanoyl-L-cysteinyl-[protein] + CoA. It catalyses the reaction L-cysteinyl-[protein] + tetradecanoyl-CoA = S-tetradecanoyl-L-cysteinyl-[protein] + CoA. It carries out the reaction L-cysteinyl-[protein] + octadecanoyl-CoA = S-octadecanoyl-L-cysteinyl-[protein] + CoA. In terms of biological role, golgi-localized palmitoyltransferase that catalyzes the addition of palmitate onto various protein substrates and therefore functions in several unrelated biological processes. Has no stringent fatty acid selectivity and in addition to palmitate can also transfer onto target proteins myristate from tetradecanoyl-CoA and stearate from octadecanoyl-CoA. Palmitoylates sex steroid hormone receptors, including ESR1, PGR and AR, thereby regulating their targeting to the plasma membrane and their function in rapid intracellular signaling upon binding of sex hormones. Palmitoylates GNAQ, a heterotrimeric G protein, regulating its dynamic localization at the plasma membrane and is thereby involved in GNAQ-dependent G protein-coupled receptor signaling pathways. Also functions in ligand-induced cell death by regulating the FAS signaling pathway through the palmitoylation and stabilization of the receptor at the plasma membrane. In epithelial cells, palmitoylates SCRIB and regulates its localization to the plasma membrane, regulating indirectly cell polarity and differentiation. Also palmitoylates JAM3 and promotes its expression at tight junctions and regulates its function in cell migration. Palmitoylates the glucose transporter GLUT4/SLC2A4 and controls the insulin-dependent translocation of GLUT4 to the plasma membrane. In brain, could also palmitoylate SNAP25 and DLG4/PSD95. Could also palmitoylate DNAJC5 and regulate its localization to the Golgi membrane. Could also palmitoylate NCDN. May play a role in follicle stimulation hormone (FSH) activation of testicular Sertoli cells. Activates pyroptosis by catalyzing palmitoylation of gasdermin-D (GSDMD). This Rattus norvegicus (Rat) protein is Palmitoyltransferase ZDHHC7.